A 518-amino-acid polypeptide reads, in one-letter code: Vesicular inhibitory amino acid transporter (518 aa).

Over methionine 1–methionine 125 the chain is Cytoplasmic. Residues phenylalanine 126–isoleucine 146 form a helical membrane-spanning segment. Topologically, residues phenylalanine 147–arginine 197 are lumenal, vesicle. A helical membrane pass occupies residues valine 198 to serine 218. Residues glycine 219 to lysine 258 are Cytoplasmic-facing. Residues phenylalanine 259–leucine 279 traverse the membrane as a helical segment. Topologically, residues serine 280–lysine 298 are lumenal, vesicle. The chain crosses the membrane as a helical span at residues phenylalanine 299 to leucine 319. Topologically, residues glutamate 320 to asparagine 334 are cytoplasmic. The chain crosses the membrane as a helical span at residues tryptophan 335–tryptophan 355. Over alanine 356–asparagine 376 the chain is Lumenal, vesicle. Residues leucine 377–valine 397 form a helical membrane-spanning segment. Residues leucine 398 to alanine 431 lie on the Cytoplasmic side of the membrane. A helical transmembrane segment spans residues leucine 432–leucine 452. Residues threonine 453–glycine 454 are Lumenal, vesicle-facing. The chain crosses the membrane as a helical span at residues serine 455–tryptophan 475. Residues arginine 476–glutamine 482 lie on the Cytoplasmic side of the membrane. Residues valine 483–histidine 503 form a helical membrane-spanning segment. Residues serine 504 to aspartate 518 lie on the Lumenal, vesicle side of the membrane.

Belongs to the amino acid/polyamine transporter 2 family. In terms of tissue distribution, initially expressed in late neurula stages in the anterior spinal cord. By early tailbud stages, expression extends posteriorly along the entire developing spinal cord and appears in the hindbrain. In late tailbud embryos, expressed in the forebrain, midbrain, hindbrain, spinal cord and retina. In swimming tadpoles, expressed in an extended and more intense pattern including interneurons.

Its subcellular location is the cytoplasmic vesicle membrane. It is found in the presynapse. It catalyses the reaction 4-aminobutanoate(out) + n H(+)(in) = 4-aminobutanoate(in) + n H(+)(out). The catalysed reaction is glycine(out) + n H(+)(in) = glycine(in) + n H(+)(out). It carries out the reaction beta-alanine(out) + n H(+)(in) = beta-alanine(in) + n H(+)(out). In terms of biological role, antiporter that exchanges vesicular protons for cytosolic 4-aminobutanoate or to a lesser extend glycine, thus allowing their secretion from nerve terminals. The transport is equally dependent on the chemical and electrical components of the proton gradient. May also transport beta-alanine. Acidification of GABAergic synaptic vesicles is a prerequisite for 4-aminobutanoate uptake. This chain is Vesicular inhibitory amino acid transporter, found in Xenopus laevis (African clawed frog).